A 162-amino-acid polypeptide reads, in one-letter code: MATAEIEEIPALLKPGQTVAGLDLGTKTIGLAVSDLGLSFAHPRPVIKRVKFTIDAQVLLKALETDKVGVIMIGLPMNMDGTAGPRVQATRAFVRTMQPLTDLPFVFWDERLSTVAAERALIGMDVSRGKRADRIDSAAAAFILQGALDRLHMMRRNDYDAG.

It belongs to the YqgF nuclease family.

It localises to the cytoplasm. Functionally, could be a nuclease involved in processing of the 5'-end of pre-16S rRNA. In Brucella abortus (strain S19), this protein is Putative pre-16S rRNA nuclease.